A 589-amino-acid polypeptide reads, in one-letter code: Peptide transporter PTR_A (589 aa).

The disordered stretch occupies residues Met-1 to Gly-56. Basic and acidic residues predominate over residues Asp-19 to Asn-42. A run of 4 helical transmembrane segments spans residues Ile-74–Leu-95, Ala-124–Ala-144, Ala-153–Ile-173, and Asn-180–Val-200. Residue Asn-233 is glycosylated (N-linked (GlcNAc...) asparagine). 8 helical membrane passes run Ile-236–Ala-256, Phe-266–Leu-286, Val-345–Ile-365, Ile-388–Ile-408, Ile-420–Phe-440, Ile-467–Thr-487, Ser-502–Leu-522, and Trp-533–Phe-553.

It belongs to the major facilitator superfamily. Proton-dependent oligopeptide transporter (POT/PTR) (TC 2.A.17) family.

It localises to the cell membrane. The enzyme catalyses a dipeptide(out) + H(+)(out) = a dipeptide(in) + H(+)(in). It catalyses the reaction an L-amino acid tripeptide(out) + H(+)(out) = an L-amino acid tripeptide(in) + H(+)(in). Functionally, peptide transporter that exploits the inwardly directed proton motive force to facilitate the cellular uptake of di/tripeptides. In Candidozyma auris (Yeast), this protein is Peptide transporter PTR_A.